Consider the following 513-residue polypeptide: ATP synthase subunit alpha (513 aa).

ATP is bound at residue 169-176 (GDRQTGKT).

The protein belongs to the ATPase alpha/beta chains family. As to quaternary structure, F-type ATPases have 2 components, CF(1) - the catalytic core - and CF(0) - the membrane proton channel. CF(1) has five subunits: alpha(3), beta(3), gamma(1), delta(1), epsilon(1). CF(0) has three main subunits: a(1), b(2) and c(9-12). The alpha and beta chains form an alternating ring which encloses part of the gamma chain. CF(1) is attached to CF(0) by a central stalk formed by the gamma and epsilon chains, while a peripheral stalk is formed by the delta and b chains.

It localises to the cell inner membrane. It carries out the reaction ATP + H2O + 4 H(+)(in) = ADP + phosphate + 5 H(+)(out). Functionally, produces ATP from ADP in the presence of a proton gradient across the membrane. The alpha chain is a regulatory subunit. The chain is ATP synthase subunit alpha from Actinobacillus succinogenes (strain ATCC 55618 / DSM 22257 / CCUG 43843 / 130Z).